A 213-amino-acid polypeptide reads, in one-letter code: Large ribosomal subunit protein uL1 (213 aa).

Belongs to the universal ribosomal protein uL1 family. Part of the 50S ribosomal subunit.

Functionally, binds directly to 23S rRNA. Probably involved in E site tRNA release. Its function is as follows. Protein L1 is also a translational repressor protein, it controls the translation of its operon by binding to its mRNA. The protein is Large ribosomal subunit protein uL1 of Methanosarcina acetivorans (strain ATCC 35395 / DSM 2834 / JCM 12185 / C2A).